The chain runs to 492 residues: Steroid 21-hydroxylase (492 aa).

Residues Arg-91 and Lys-120 each coordinate heme b. Residue Arg-231 participates in 17alpha-hydroxyprogesterone binding. Residue Arg-231 coordinates progesterone. Positions 363, 424, and 426 each coordinate heme b.

The protein belongs to the cytochrome P450 family. Requires heme b as cofactor.

It is found in the endoplasmic reticulum membrane. The protein localises to the microsome membrane. It catalyses the reaction 17alpha-hydroxyprogesterone + reduced [NADPH--hemoprotein reductase] + O2 = 11-deoxycortisol + oxidized [NADPH--hemoprotein reductase] + H2O + H(+). It carries out the reaction progesterone + reduced [NADPH--hemoprotein reductase] + O2 = 21-hydroxyprogesterone + oxidized [NADPH--hemoprotein reductase] + H2O + H(+). Functionally, specifically catalyzes the 21-hydroxylation of steroids. Required for the adrenal synthesis of mineralocorticoids and glucocorticoids. The sequence is that of Steroid 21-hydroxylase (CYP21) from Felis catus (Cat).